Here is a 428-residue protein sequence, read N- to C-terminus: Putative heme-binding peroxidase (428 aa).

Residues 1 to 33 form a disordered region; it reads MTAIQKPVVAKREAPKAEVNPTVSRSTQTETIK. The segment covering 21–32 has biased composition (polar residues); sequence PTVSRSTQTETI. His-188 serves as the catalytic Proton acceptor. His-312 contacts heme b. Trp-328 (tryptophan radical intermediate) is an active-site residue.

The protein belongs to the peroxidase family. Cytochrome c peroxidase subfamily. It depends on heme b as a cofactor.

Its function is as follows. Destroys radicals which are normally produced within the cells and which are toxic to biological systems. The chain is Putative heme-binding peroxidase from Debaryomyces hansenii (strain ATCC 36239 / CBS 767 / BCRC 21394 / JCM 1990 / NBRC 0083 / IGC 2968) (Yeast).